A 199-amino-acid polypeptide reads, in one-letter code: Transcriptional regulatory protein DesR (199 aa).

The 115-residue stretch at 3 to 117 (SIFIAEDQQM…ELANAIRSVM (115 aa)) folds into the Response regulatory domain. Aspartate 54 bears the 4-aspartylphosphate mark. The region spanning 131–196 (LYSEANPLTD…EAITRSKEKG (66 aa)) is the HTH luxR-type domain. Residues 155-174 (TKEIAQELSIKSGTVRNYIS) constitute a DNA-binding region (H-T-H motif).

Post-translationally, phosphorylated by DesK.

Its subcellular location is the cytoplasm. Member of the two-component regulatory system DesR/DesK, responsible for cold induction of the des gene coding for the Delta5 acyl-lipid desaturase. This is Transcriptional regulatory protein DesR (desR) from Bacillus subtilis (strain 168).